The chain runs to 371 residues: Dihydroorotate dehydrogenase (quinone) (371 aa).

Residues 79 to 83 (AGFDK) and Thr-103 contribute to the FMN site. Lys-83 is a substrate binding site. 128–132 (NRMGF) is a substrate binding site. Residues Asn-156 and Asn-189 each contribute to the FMN site. Asn-189 serves as a coordination point for substrate. The active-site Nucleophile is Ser-192. Substrate is bound at residue Asn-194. The FMN site is built by Lys-225 and Thr-253. A substrate-binding site is contributed by 254-255 (NT). Residues Gly-279, Gly-308, and 329-330 (YT) each bind FMN.

It belongs to the dihydroorotate dehydrogenase family. Type 2 subfamily. In terms of assembly, monomer. FMN is required as a cofactor.

The protein localises to the cell membrane. It catalyses the reaction (S)-dihydroorotate + a quinone = orotate + a quinol. Its pathway is pyrimidine metabolism; UMP biosynthesis via de novo pathway; orotate from (S)-dihydroorotate (quinone route): step 1/1. In terms of biological role, catalyzes the conversion of dihydroorotate to orotate with quinone as electron acceptor. The protein is Dihydroorotate dehydrogenase (quinone) of Corynebacterium glutamicum (strain R).